Reading from the N-terminus, the 101-residue chain is Small ribosomal subunit protein uS14 (101 aa).

Basic and acidic residues predominate over residues 1 to 10; the sequence is MAKKSSIEKN. A disordered region spans residues 1–23; the sequence is MAKKSSIEKNNRRRKMTKNAAPK. Basic residues predominate over residues 11-23; it reads NRRRKMTKNAAPK.

Belongs to the universal ribosomal protein uS14 family. Part of the 30S ribosomal subunit. Contacts proteins S3 and S10.

Functionally, binds 16S rRNA, required for the assembly of 30S particles and may also be responsible for determining the conformation of the 16S rRNA at the A site. The protein is Small ribosomal subunit protein uS14 of Rhodopseudomonas palustris (strain BisB5).